The primary structure comprises 461 residues: Argininosuccinate lyase (461 aa).

It belongs to the lyase 1 family. Argininosuccinate lyase subfamily.

It is found in the cytoplasm. The catalysed reaction is 2-(N(omega)-L-arginino)succinate = fumarate + L-arginine. It participates in amino-acid biosynthesis; L-arginine biosynthesis; L-arginine from L-ornithine and carbamoyl phosphate: step 3/3. The protein is Argininosuccinate lyase of Dehalococcoides mccartyi (strain CBDB1).